Reading from the N-terminus, the 210-residue chain is Imidazole glycerol phosphate synthase subunit HisH (210 aa).

One can recognise a Glutamine amidotransferase type-1 domain in the interval 1 to 205 (MIAVINYGAG…VELALSRGSG (205 aa)). Catalysis depends on Cys-79, which acts as the Nucleophile. Residues His-180 and Glu-182 contribute to the active site.

Heterodimer of HisH and HisF.

It is found in the cytoplasm. The enzyme catalyses 5-[(5-phospho-1-deoxy-D-ribulos-1-ylimino)methylamino]-1-(5-phospho-beta-D-ribosyl)imidazole-4-carboxamide + L-glutamine = D-erythro-1-(imidazol-4-yl)glycerol 3-phosphate + 5-amino-1-(5-phospho-beta-D-ribosyl)imidazole-4-carboxamide + L-glutamate + H(+). The catalysed reaction is L-glutamine + H2O = L-glutamate + NH4(+). Its pathway is amino-acid biosynthesis; L-histidine biosynthesis; L-histidine from 5-phospho-alpha-D-ribose 1-diphosphate: step 5/9. IGPS catalyzes the conversion of PRFAR and glutamine to IGP, AICAR and glutamate. The HisH subunit catalyzes the hydrolysis of glutamine to glutamate and ammonia as part of the synthesis of IGP and AICAR. The resulting ammonia molecule is channeled to the active site of HisF. The sequence is that of Imidazole glycerol phosphate synthase subunit HisH from Herpetosiphon aurantiacus (strain ATCC 23779 / DSM 785 / 114-95).